Here is a 133-residue protein sequence, read N- to C-terminus: Core atranone cluster (CAC) protein 11 (133 aa).

It participates in mycotoxin biosynthesis. Part of the core atranone cluster (CAC) which products are predicted to catalyze most or all steps of mycotoxin atranone synthesis, starting from geranylgeranyl pyrophosphate (GGPP). The initial cyclization of GGPP to dolabellane is probably performed by the terpene cyclase ATR13. The Baeyer-Villiger oxidation near the end of the atranone synthesis, which converts atranones D and E to atranones F and G is predicted to be catalyzed by the monooxygenase ATR8. Of the CAC's other predicted gene products, the reducing PKS ATR6 might synthesize a polyketide chain. This polyketide is probably transferred onto the atranone backbone by the polyketide transferase ATR5. Other predicted CAC products include 4 oxygenases (ATR2, ATR3, ATR4, and ATR14), 3 short-chain reductases (ATR7, ATR9, and ATR10), and a methyltransferase (ATR12). These may all be involved in the various steps of atranone biosynthesis, although their specific roles must await experimental determination. The polypeptide is Core atranone cluster (CAC) protein 11 (Stachybotrys chlorohalonatus (strain IBT 40285)).